A 364-amino-acid polypeptide reads, in one-letter code: tRNA-specific 2-thiouridylase MnmA 1 (364 aa).

Residues 11 to 18 (GMSGGTDS) and Phe37 contribute to the ATP site. Cys96 functions as the Nucleophile in the catalytic mechanism. Cysteines 96 and 193 form a disulfide. Residue Gly120 coordinates ATP. Residues 142–144 (KDQ) are interaction with tRNA. Residue Cys193 is the Cysteine persulfide intermediate of the active site. An interaction with tRNA region spans residues 309 to 310 (RY).

This sequence belongs to the MnmA/TRMU family.

Its subcellular location is the cytoplasm. It carries out the reaction S-sulfanyl-L-cysteinyl-[protein] + uridine(34) in tRNA + AH2 + ATP = 2-thiouridine(34) in tRNA + L-cysteinyl-[protein] + A + AMP + diphosphate + H(+). Catalyzes the 2-thiolation of uridine at the wobble position (U34) of tRNA, leading to the formation of s(2)U34. In Bacteroides fragilis (strain ATCC 25285 / DSM 2151 / CCUG 4856 / JCM 11019 / LMG 10263 / NCTC 9343 / Onslow / VPI 2553 / EN-2), this protein is tRNA-specific 2-thiouridylase MnmA 1.